The chain runs to 351 residues: Chorismate synthase (351 aa).

A disordered region spans residues E39 to E60. NADP(+) is bound by residues R48 and R53. FMN contacts are provided by residues R124–S126, A276, K291–S295, and R317.

This sequence belongs to the chorismate synthase family. In terms of assembly, homotetramer. It depends on FMNH2 as a cofactor.

The enzyme catalyses 5-O-(1-carboxyvinyl)-3-phosphoshikimate = chorismate + phosphate. Its pathway is metabolic intermediate biosynthesis; chorismate biosynthesis; chorismate from D-erythrose 4-phosphate and phosphoenolpyruvate: step 7/7. Functionally, catalyzes the anti-1,4-elimination of the C-3 phosphate and the C-6 proR hydrogen from 5-enolpyruvylshikimate-3-phosphate (EPSP) to yield chorismate, which is the branch point compound that serves as the starting substrate for the three terminal pathways of aromatic amino acid biosynthesis. This reaction introduces a second double bond into the aromatic ring system. The chain is Chorismate synthase from Syntrophobacter fumaroxidans (strain DSM 10017 / MPOB).